Consider the following 99-residue polypeptide: Leydig cell tumor 10 kDa protein homolog (99 aa).

A disordered region spans residues 1–37; sequence MAQGQRKFQARKPAKSKTAATASEKNRGPRKGGRVIA. A compositionally biased stretch (basic residues) spans 28–37; the sequence is GPRKGGRVIA.

Belongs to the UPF0390 family.

In terms of biological role, may have a potential role in hypercalcemia of malignancy. The protein is Leydig cell tumor 10 kDa protein homolog of Pongo abelii (Sumatran orangutan).